A 320-amino-acid chain; its full sequence is Cytochrome c biogenesis protein CcsA (320 aa).

8 consecutive transmembrane segments (helical) span residues 15–35 (FSIV…DEII), 43–63 (KGMI…WIYS), 71–91 (LYES…VPYF), 98–118 (LSTI…SGLL), 143–163 (MILS…LLVI), 224–244 (VISL…VWAN), 251–271 (WNWD…AIYL), and 285–305 (AIVA…VNLL).

This sequence belongs to the CcmF/CycK/Ccl1/NrfE/CcsA family. In terms of assembly, may interact with Ccs1.

It is found in the plastid. The protein resides in the chloroplast thylakoid membrane. In terms of biological role, required during biogenesis of c-type cytochromes (cytochrome c6 and cytochrome f) at the step of heme attachment. In Panax ginseng (Korean ginseng), this protein is Cytochrome c biogenesis protein CcsA.